The following is a 462-amino-acid chain: Argininosuccinate lyase (462 aa).

This sequence belongs to the lyase 1 family. Argininosuccinate lyase subfamily.

It localises to the cytoplasm. The catalysed reaction is 2-(N(omega)-L-arginino)succinate = fumarate + L-arginine. It functions in the pathway amino-acid biosynthesis; L-arginine biosynthesis; L-arginine from L-ornithine and carbamoyl phosphate: step 3/3. The chain is Argininosuccinate lyase from Dechloromonas aromatica (strain RCB).